Reading from the N-terminus, the 476-residue chain is Ribulose bisphosphate carboxylase large chain (476 aa).

Positions 124 and 174 each coordinate substrate. The active-site Proton acceptor is K176. K178 contacts substrate. Mg(2+) is bound by residues K202, D204, and E205. An N6-carboxylysine modification is found at K202. H295 (proton acceptor) is an active-site residue. Residues R296, H328, and S380 each contribute to the substrate site.

It belongs to the RuBisCO large chain family. Type I subfamily. As to quaternary structure, heterohexadecamer of 8 large chains and 8 small chains; disulfide-linked. The disulfide link is formed within the large subunit homodimers. Requires Mg(2+) as cofactor. The disulfide bond which can form in the large chain dimeric partners within the hexadecamer appears to be associated with oxidative stress and protein turnover.

The protein localises to the carboxysome. It catalyses the reaction 2 (2R)-3-phosphoglycerate + 2 H(+) = D-ribulose 1,5-bisphosphate + CO2 + H2O. It carries out the reaction D-ribulose 1,5-bisphosphate + O2 = 2-phosphoglycolate + (2R)-3-phosphoglycerate + 2 H(+). Functionally, ruBisCO catalyzes two reactions: the carboxylation of D-ribulose 1,5-bisphosphate, the primary event in carbon dioxide fixation, as well as the oxidative fragmentation of the pentose substrate in the photorespiration process. Both reactions occur simultaneously and in competition at the same active site. In Acaryochloris marina (strain MBIC 11017), this protein is Ribulose bisphosphate carboxylase large chain.